A 317-amino-acid chain; its full sequence is Adenine deaminase (317 aa).

The Zn(2+) site is built by H14, H16, and H194. E197 (proton donor) is an active-site residue. A Zn(2+)-binding site is contributed by D275. D276 provides a ligand contact to substrate.

The protein belongs to the metallo-dependent hydrolases superfamily. Adenosine and AMP deaminases family. Adenine deaminase type 2 subfamily. Zn(2+) is required as a cofactor.

The enzyme catalyses adenine + H2O + H(+) = hypoxanthine + NH4(+). Functionally, catalyzes the hydrolytic deamination of adenine to hypoxanthine. Plays an important role in the purine salvage pathway and in nitrogen catabolism. The chain is Adenine deaminase from Pseudomonas syringae pv. tomato (strain ATCC BAA-871 / DC3000).